A 401-amino-acid polypeptide reads, in one-letter code: Glutamyl-tRNA reductase (401 aa).

Substrate is bound by residues 45 to 48, Ser101, 106 to 108, and Gln112; these read TCNR and EDQ. Residue Cys46 is the Nucleophile of the active site. 177–182 contacts NADP(+); it reads GYGDVG.

It belongs to the glutamyl-tRNA reductase family. Homodimer.

The enzyme catalyses (S)-4-amino-5-oxopentanoate + tRNA(Glu) + NADP(+) = L-glutamyl-tRNA(Glu) + NADPH + H(+). Its pathway is porphyrin-containing compound metabolism; protoporphyrin-IX biosynthesis; 5-aminolevulinate from L-glutamyl-tRNA(Glu): step 1/2. In terms of biological role, catalyzes the NADPH-dependent reduction of glutamyl-tRNA(Glu) to glutamate 1-semialdehyde (GSA). The chain is Glutamyl-tRNA reductase from Clostridium botulinum (strain Alaska E43 / Type E3).